The following is a 196-amino-acid chain: V-type proton ATPase proteolipid subunit (196 aa).

Topologically, residues 1-25 (MFQLLSFLLSGEATAVERIITDACP) are lumenal. A helical transmembrane segment spans residues 26–46 (VYAPFFGAMGVTAALVFTVMG). Over 47 to 72 (AAYGTAKASVGISNMGVMKPDLVIKA) the chain is Cytoplasmic. The helical transmembrane segment at 73–93 (FIPVIFAGVIAIYGLIICVIL) threads the bilayer. Residues 94–111 (VGGIKPNANYTLMKSFTD) are Lumenal-facing. A helical membrane pass occupies residues 112–132 (LGAGLTVGLCGLAAGMAIGIV). Residues 133–150 (GDSGVRAFGQQPKLYVIM) lie on the Cytoplasmic side of the membrane. The helical transmembrane segment at 151–171 (MLILIFSEALGLYGLIIGILL) threads the bilayer. The Lumenal segment spans residues 172–196 (SSVSDTYCPGQALVPLNSGNVIGKN).

This sequence belongs to the V-ATPase proteolipid subunit family. As to quaternary structure, V-ATPase is a heteromultimeric enzyme composed of a peripheral catalytic V1 complex (main components: subunits A, B, C, D, E, and F) attached to an integral membrane V0 proton pore complex (main component: the proteolipid protein; which is present as a hexamer that forms the proton-conducting pore).

Its subcellular location is the vacuole membrane. Proton-conducting pore forming subunit of the membrane integral V0 complex of vacuolar ATPase. V-ATPase is responsible for acidifying a variety of intracellular compartments in eukaryotic cells. The sequence is that of V-type proton ATPase proteolipid subunit (vatP) from Dictyostelium discoideum (Social amoeba).